The sequence spans 466 residues: Keratin, type II cytoskeletal 7 (466 aa).

Ser2 carries the post-translational modification N-acetylserine. Phosphoserine occurs at positions 2 and 7. Residues 2–91 (SLHFGSQVFS…DPSIQQVRQE (90 aa)) form a head region. Residue Ser12 is glycosylated (O-linked (GlcNAc) serine). Arg20 carries the post-translational modification Dimethylated arginine; alternate. Omega-N-methylarginine; alternate is present on Arg20. A phosphoserine mark is found at Ser54, Ser72, and Ser84. The tract at residues 91–127 (EEREQIKTLNNKFASFIDKVRFLEQQNKLLETKWALL) is coil 1A. The region spanning 92–404 (EREQIKTLNN…KLLEGEESRL (313 aa)) is the IF rod domain. Thr98 is modified (phosphothreonine). The interval 128–145 (QEQKSAKSNRLPGIFEAQ) is linker 1. Residue Lys131 forms a Glycyl lysine isopeptide (Lys-Gly) (interchain with G-Cter in SUMO2) linkage. The interval 146-237 (IAGLRKQLEA…TLYEQELKEL (92 aa)) is coil 1B. Lys180 carries the post-translational modification N6-acetyllysine. The segment at 238 to 261 (QSEVSDTSVVLSMDNNRSLDLDSI) is linker 12. Position 255 is a phosphoserine (Ser255). A coil 2 region spans residues 262-400 (IAEVKAQYEE…ATYRKLLEGE (139 aa)). Glycyl lysine isopeptide (Lys-Gly) (interchain with G-Cter in SUMO2) cross-links involve residues Lys266 and Lys287. Thr290 is modified (phosphothreonine). Glycyl lysine isopeptide (Lys-Gly) (interchain with G-Cter in SUMO2) cross-links involve residues Lys297 and Lys332. Residues 401-466 (ESRLTGDGVG…TSATSRSPRK (66 aa)) are tail.

This sequence belongs to the intermediate filament family. Heterotetramer of two type I and two type II keratins. Interacts with eukaryotic translation initiator factor 3 (eIF3) subunit EIF3S10. Interacts with GPER1. In terms of processing, arg-20 is dimethylated, probably to asymmetric dimethylarginine.

In terms of biological role, blocks interferon-dependent interphase and stimulates DNA synthesis in cells. This is Keratin, type II cytoskeletal 7 from Bos taurus (Bovine).